A 117-amino-acid polypeptide reads, in one-letter code: Large ribosomal subunit protein bL19 (117 aa).

This sequence belongs to the bacterial ribosomal protein bL19 family.

Functionally, this protein is located at the 30S-50S ribosomal subunit interface and may play a role in the structure and function of the aminoacyl-tRNA binding site. The polypeptide is Large ribosomal subunit protein bL19 (Micrococcus luteus (strain ATCC 4698 / DSM 20030 / JCM 1464 / CCM 169 / CCUG 5858 / IAM 1056 / NBRC 3333 / NCIMB 9278 / NCTC 2665 / VKM Ac-2230) (Micrococcus lysodeikticus)).